Here is a 361-residue protein sequence, read N- to C-terminus: Phospho-N-acetylmuramoyl-pentapeptide-transferase (361 aa).

Transmembrane regions (helical) follow at residues L28–L48, T73–L93, Y97–Y117, F134–L154, V168–T188, G200–A220, A237–F257, V264–I284, I289–V309, and Q338–L358.

It belongs to the glycosyltransferase 4 family. MraY subfamily. Mg(2+) serves as cofactor.

The protein localises to the cell inner membrane. It carries out the reaction UDP-N-acetyl-alpha-D-muramoyl-L-alanyl-gamma-D-glutamyl-meso-2,6-diaminopimeloyl-D-alanyl-D-alanine + di-trans,octa-cis-undecaprenyl phosphate = di-trans,octa-cis-undecaprenyl diphospho-N-acetyl-alpha-D-muramoyl-L-alanyl-D-glutamyl-meso-2,6-diaminopimeloyl-D-alanyl-D-alanine + UMP. It functions in the pathway cell wall biogenesis; peptidoglycan biosynthesis. Functionally, catalyzes the initial step of the lipid cycle reactions in the biosynthesis of the cell wall peptidoglycan: transfers peptidoglycan precursor phospho-MurNAc-pentapeptide from UDP-MurNAc-pentapeptide onto the lipid carrier undecaprenyl phosphate, yielding undecaprenyl-pyrophosphoryl-MurNAc-pentapeptide, known as lipid I. The chain is Phospho-N-acetylmuramoyl-pentapeptide-transferase from Nitrosomonas europaea (strain ATCC 19718 / CIP 103999 / KCTC 2705 / NBRC 14298).